We begin with the raw amino-acid sequence, 96 residues long: UPF0213 protein Lreu_0682 (96 aa).

The 78-residue stretch at 4–81 (EKYYIYVLYC…KHQTRRQKEK (78 aa)) folds into the GIY-YIG domain.

The protein belongs to the UPF0213 family.

The protein is UPF0213 protein Lreu_0682 of Limosilactobacillus reuteri (strain DSM 20016) (Lactobacillus reuteri).